Consider the following 36-residue polypeptide: Pancreatic polypeptide (36 aa).

Tyr-36 is modified (tyrosine amide).

Belongs to the NPY family.

The protein localises to the secreted. In terms of biological role, hormone secreted by pancreatic cells that acts as a regulator of pancreatic and gastrointestinal functions probably by signaling through the G protein-coupled receptor NPY4R2. In Chinchilla chinchilla (Short-tailed chinchilla), this protein is Pancreatic polypeptide (PPY).